Reading from the N-terminus, the 276-residue chain is Diaminopimelate epimerase (276 aa).

Substrate contacts are provided by N13, Q46, and N66. C75 (proton donor) is an active-site residue. Residues 76-77 (GN), N159, N192, and 210-211 (ER) contribute to the substrate site. The active-site Proton acceptor is the C219. 220-221 (GS) is a substrate binding site.

Belongs to the diaminopimelate epimerase family. In terms of assembly, homodimer.

Its subcellular location is the cytoplasm. The enzyme catalyses (2S,6S)-2,6-diaminopimelate = meso-2,6-diaminopimelate. It participates in amino-acid biosynthesis; L-lysine biosynthesis via DAP pathway; DL-2,6-diaminopimelate from LL-2,6-diaminopimelate: step 1/1. Catalyzes the stereoinversion of LL-2,6-diaminopimelate (L,L-DAP) to meso-diaminopimelate (meso-DAP), a precursor of L-lysine and an essential component of the bacterial peptidoglycan. This Colwellia psychrerythraea (strain 34H / ATCC BAA-681) (Vibrio psychroerythus) protein is Diaminopimelate epimerase.